We begin with the raw amino-acid sequence, 204 residues long: Molybdenum cofactor guanylyltransferase (204 aa).

Residues 12-14 (LAG), Lys-25, Asn-53, Asp-71, and Asp-101 contribute to the GTP site. Position 101 (Asp-101) interacts with Mg(2+).

The protein belongs to the MobA family. As to quaternary structure, monomer. The cofactor is Mg(2+).

The protein localises to the cytoplasm. The catalysed reaction is Mo-molybdopterin + GTP + H(+) = Mo-molybdopterin guanine dinucleotide + diphosphate. Transfers a GMP moiety from GTP to Mo-molybdopterin (Mo-MPT) cofactor (Moco or molybdenum cofactor) to form Mo-molybdopterin guanine dinucleotide (Mo-MGD) cofactor. The chain is Molybdenum cofactor guanylyltransferase from Ralstonia pickettii (strain 12J).